The chain runs to 589 residues: Cysteine/serine-rich nuclear protein 1 (589 aa).

2 disordered regions span residues 1-62 (MTGL…RDFC) and 309-388 (FREL…GVDD). 2 stretches are compositionally biased toward low complexity: residues 17–41 (SSVS…SVSR) and 345–368 (DNSC…TSEA).

The protein belongs to the AXUD1 family. Ubiquitous. Most abundantly expressed in lung, placenta, skeletal muscle, pancreas and leukocyte. Frequently down-regulated in lung, kidney, liver and colon cancers compared with their corresponding normal tissues.

It localises to the nucleus. In terms of biological role, binds to the consensus sequence 5'-AGAGTG-3' and has transcriptional activator activity. May have a tumor-suppressor function. May play a role in apoptosis. This chain is Cysteine/serine-rich nuclear protein 1 (CSRNP1), found in Homo sapiens (Human).